The chain runs to 242 residues: MEGWQRAFVLHSRPWSETSLMLDVFTEESGRVRLVAKGARSKRSNLKGALQPFTPLLLRYSGRGEVKTLRSAEAVSLALPLSGITLYSGLYINELLSRVLEYETRFSELFFDYLNCIQALAGTTGSPEPALRRFELALLGHLGYGVNFTHCAGSGERVDDTMTYRYREEKGFFASVVIDNNTFTGRHLKALEEREFPDVDTLRAAKRFTRMALKPYLGGKPLKSRELFRQFMPKRTVKMKKD.

Belongs to the RecO family. In terms of assembly, monomer.

In terms of biological role, involved in DNA repair and RecF pathway recombination. This is DNA repair protein RecO from Salmonella enteritidis PT4 (strain P125109).